We begin with the raw amino-acid sequence, 130 residues long: WAP four-disulfide core domain protein 3 (130 aa).

An N-terminal signal peptide occupies residues 1 to 16 (MKALLALGFLASWVAA). WAP domains lie at 17-61 (GEHA…RGDI) and 62-106 (EGGR…IPGL). Intrachain disulfides connect Cys25–Cys49, Cys32–Cys53, Cys36–Cys48, Cys42–Cys57, Cys69–Cys94, Cys77–Cys98, Cys81–Cys93, and Cys87–Cys102. Asn116 carries an N-linked (GlcNAc...) asparagine glycan.

Its subcellular location is the secreted. In Mus musculus (Mouse), this protein is WAP four-disulfide core domain protein 3 (Wfdc3).